Reading from the N-terminus, the 289-residue chain is tRNA pseudouridine synthase B (289 aa).

The Nucleophile role is filled by Asp55. Residues 243–289 (PGGVLAQHEREGSRALDSAAGNAEHDREEARIADNNREDRSRQHADR) form a disordered region. Positions 265–289 (AEHDREEARIADNNREDRSRQHADR) are enriched in basic and acidic residues.

This sequence belongs to the pseudouridine synthase TruB family. Type 1 subfamily.

The catalysed reaction is uridine(55) in tRNA = pseudouridine(55) in tRNA. In terms of biological role, responsible for synthesis of pseudouridine from uracil-55 in the psi GC loop of transfer RNAs. The protein is tRNA pseudouridine synthase B of Chlorobium luteolum (strain DSM 273 / BCRC 81028 / 2530) (Pelodictyon luteolum).